Here is a 680-residue protein sequence, read N- to C-terminus: DNA-directed RNA polymerase subunit beta' (680 aa).

4 residues coordinate Zn(2+): cysteine 69, cysteine 71, cysteine 87, and cysteine 90. Mg(2+) contacts are provided by aspartate 489, aspartate 491, and aspartate 493.

Belongs to the RNA polymerase beta' chain family. RpoC1 subfamily. In plastids the minimal PEP RNA polymerase catalytic core is composed of four subunits: alpha, beta, beta', and beta''. When a (nuclear-encoded) sigma factor is associated with the core the holoenzyme is formed, which can initiate transcription. Mg(2+) is required as a cofactor. Zn(2+) serves as cofactor.

It localises to the plastid. It is found in the chloroplast. It carries out the reaction RNA(n) + a ribonucleoside 5'-triphosphate = RNA(n+1) + diphosphate. DNA-dependent RNA polymerase catalyzes the transcription of DNA into RNA using the four ribonucleoside triphosphates as substrates. The sequence is that of DNA-directed RNA polymerase subunit beta' from Aethionema grandiflorum (Persian stone-cress).